The sequence spans 293 residues: Ribosomal protein L11 methyltransferase (293 aa).

Positions 145, 166, 188, and 230 each coordinate S-adenosyl-L-methionine.

The protein belongs to the methyltransferase superfamily. PrmA family.

The protein localises to the cytoplasm. It carries out the reaction L-lysyl-[protein] + 3 S-adenosyl-L-methionine = N(6),N(6),N(6)-trimethyl-L-lysyl-[protein] + 3 S-adenosyl-L-homocysteine + 3 H(+). Its function is as follows. Methylates ribosomal protein L11. The sequence is that of Ribosomal protein L11 methyltransferase from Shewanella putrefaciens (strain CN-32 / ATCC BAA-453).